A 284-amino-acid polypeptide reads, in one-letter code: Putative pyrophosphorylase ModD (284 aa).

Belongs to the NadC/ModD family.

The chain is Putative pyrophosphorylase ModD (modD) from Escherichia coli O127:H6 (strain E2348/69 / EPEC).